Reading from the N-terminus, the 432-residue chain is Neuronal pentraxin-1 (432 aa).

An N-terminal signal peptide occupies residues 1–22 (MLAGRAARTCALLALCLLGSRA). Residues 90–128 (ESQSTLDAGPGEARSGGGRKQPGSGKNTMGDLSRTPASE) form a disordered region. Residues N154 and N193 are each glycosylated (N-linked (GlcNAc...) asparagine). Residues 226 to 428 (DKFQLTFPLR…GATKWTFEAC (203 aa)) enclose the Pentraxin (PTX) domain. An intrachain disulfide couples C256 to C316. 5 residues coordinate Ca(2+): N280, E358, Q359, D360, and Q370.

Homooligomer or heterooligomer (probably pentamer) with neuronal pentraxin receptor (NPTXR). Ca(2+) is required as a cofactor. Glycosylated. In terms of tissue distribution, cerebellum, hippocampus and cerebral cortex.

Its subcellular location is the secreted. The protein resides in the cytoplasmic vesicle. It is found in the secretory vesicle. It localises to the endoplasmic reticulum. May be involved in mediating uptake of synaptic material during synapse remodeling or in mediating the synaptic clustering of AMPA glutamate receptors at a subset of excitatory synapses. The polypeptide is Neuronal pentraxin-1 (Nptx1) (Rattus norvegicus (Rat)).